The chain runs to 275 residues: Bis(5'-nucleosyl)-tetraphosphatase, symmetrical (275 aa).

It belongs to the Ap4A hydrolase family.

It catalyses the reaction P(1),P(4)-bis(5'-adenosyl) tetraphosphate + H2O = 2 ADP + 2 H(+). Its function is as follows. Hydrolyzes diadenosine 5',5'''-P1,P4-tetraphosphate to yield ADP. The chain is Bis(5'-nucleosyl)-tetraphosphatase, symmetrical from Hamiltonella defensa subsp. Acyrthosiphon pisum (strain 5AT).